The chain runs to 384 residues: UDP-galactopyranose mutase (384 aa).

The signal sequence occupies residues 1-23; sequence MKSKKILIVGAGFSGAVIGRQLA. Residues S14, 33–34, N41, and 60–61 each bind FAD; these read DQ and HI. UDP-alpha-D-galactose-binding residues include N84, F151, T156, W160, and Y185. F219 provides a ligand contact to FAD. The UDP-alpha-D-galactose site is built by N270, R280, and Y314. R343 provides a ligand contact to FAD. Residue Y349 coordinates UDP-alpha-D-galactose. 350 to 355 contacts FAD; it reads LDMDVT.

Belongs to the UDP-galactopyranose/dTDP-fucopyranose mutase family. As to quaternary structure, homodimer. FAD serves as cofactor.

It carries out the reaction UDP-alpha-D-galactose = UDP-alpha-D-galactofuranose. It participates in bacterial outer membrane biogenesis; LPS O-antigen biosynthesis. Involved in the biosynthesis of the galactose-containing O-side-chain polysaccharide backbone structure of D-galactan I which is a key component of lipopolysaccharide (LPS). Catalyzes the interconversion through a 2-keto intermediate of uridine diphosphogalactopyranose (UDP-GalP) into uridine diphosphogalactofuranose (UDP-GalF) which is the biosynthetic precursor of galactofuranosyl residues. The polypeptide is UDP-galactopyranose mutase (rfbD) (Klebsiella pneumoniae).